The sequence spans 170 residues: Acireductone dioxygenase (170 aa).

Positions 99, 101, 105, and 144 each coordinate Fe(2+). Positions 99, 101, 105, and 144 each coordinate Ni(2+).

The protein belongs to the acireductone dioxygenase (ARD) family. Monomer. It depends on Fe(2+) as a cofactor. Ni(2+) serves as cofactor.

The enzyme catalyses 1,2-dihydroxy-5-(methylsulfanyl)pent-1-en-3-one + O2 = 3-(methylsulfanyl)propanoate + CO + formate + 2 H(+). The catalysed reaction is 1,2-dihydroxy-5-(methylsulfanyl)pent-1-en-3-one + O2 = 4-methylsulfanyl-2-oxobutanoate + formate + 2 H(+). It functions in the pathway amino-acid biosynthesis; L-methionine biosynthesis via salvage pathway; L-methionine from S-methyl-5-thio-alpha-D-ribose 1-phosphate: step 5/6. Its function is as follows. Catalyzes 2 different reactions between oxygen and the acireductone 1,2-dihydroxy-3-keto-5-methylthiopentene (DHK-MTPene) depending upon the metal bound in the active site. Fe-containing acireductone dioxygenase (Fe-ARD) produces formate and 2-keto-4-methylthiobutyrate (KMTB), the alpha-ketoacid precursor of methionine in the methionine recycle pathway. Ni-containing acireductone dioxygenase (Ni-ARD) produces methylthiopropionate, carbon monoxide and formate, and does not lie on the methionine recycle pathway. This is Acireductone dioxygenase from Bacillus cereus (strain ATCC 10987 / NRS 248).